The chain runs to 376 residues: Succinyl-diaminopimelate desuccinylase 1 (376 aa).

His67 is a binding site for Zn(2+). The active site involves Asp69. Asp100 serves as a coordination point for Zn(2+). Glu134 functions as the Proton acceptor in the catalytic mechanism. Zn(2+) is bound by residues Glu135, Glu163, and His349.

The protein belongs to the peptidase M20A family. DapE subfamily. As to quaternary structure, homodimer. It depends on Zn(2+) as a cofactor. Co(2+) is required as a cofactor.

It carries out the reaction N-succinyl-(2S,6S)-2,6-diaminopimelate + H2O = (2S,6S)-2,6-diaminopimelate + succinate. Its pathway is amino-acid biosynthesis; L-lysine biosynthesis via DAP pathway; LL-2,6-diaminopimelate from (S)-tetrahydrodipicolinate (succinylase route): step 3/3. Functionally, catalyzes the hydrolysis of N-succinyl-L,L-diaminopimelic acid (SDAP), forming succinate and LL-2,6-diaminopimelate (DAP), an intermediate involved in the bacterial biosynthesis of lysine and meso-diaminopimelic acid, an essential component of bacterial cell walls. The protein is Succinyl-diaminopimelate desuccinylase 1 of Shewanella loihica (strain ATCC BAA-1088 / PV-4).